Reading from the N-terminus, the 263-residue chain is MLLAWVQAFLVSNMLLAEAYGSGGCFWDNGHLYREDQTSPAPGLRCLNWLDAQSGLASAPVSGAGNHSYCRNPDEDPRGPWCYVSGEAGVPEKRPCEDLRCPETTSQALPAFTTEIQEASEGPGADEVQVFAPANALPARSEAAAVQPVIGISQRVRMNSKEKKDLGTLGYVLGITMMVIIIAIGAGIILGYSYKRGKDLKEQHDQKVCEREMQRITLPLSAFTNPTCEIVDEKTVVVHTSQTPVDPQEGTTPLMGQAGTPGA.

A signal peptide spans Met-1–Gly-21. Residues Ser-22 to Thr-168 are Extracellular-facing. One can recognise a Kringle domain in the interval Gly-24–Cys-101. 3 disulfides stabilise this stretch: Cys-25–Cys-101, Cys-46–Cys-82, and Cys-70–Cys-96. An O-linked (GalNAc...) serine glycan is attached at Ser-39. N-linked (GlcNAc...) (complex) asparagine glycosylation is present at Asn-66. Residues Leu-169–Ile-189 traverse the membrane as a helical segment. Residues Leu-190 to Ala-263 lie on the Cytoplasmic side of the membrane. Residues Gln-242 to Thr-251 show a composition bias toward polar residues. Residues Gln-242–Ala-263 form a disordered region.

N- and O-glycosylated. O-glycosylated with core 1 or possibly core 8 glycans. N-glycan heterogeneity at Asn-66: dHex1Hex5HexNAc4 (major) and dHex1Hex6HexNAc5 (minor).

The protein resides in the cell membrane. In terms of biological role, negative regulator of hepatic phosphatidylinositol 3-kinase (PI3K) activity. The polypeptide is Phosphoinositide-3-kinase-interacting protein 1 (PIK3IP1) (Homo sapiens (Human)).